We begin with the raw amino-acid sequence, 345 residues long: Phosphoribosylformylglycinamidine cyclo-ligase (345 aa).

This sequence belongs to the AIR synthase family.

Its subcellular location is the cytoplasm. It catalyses the reaction 2-formamido-N(1)-(5-O-phospho-beta-D-ribosyl)acetamidine + ATP = 5-amino-1-(5-phospho-beta-D-ribosyl)imidazole + ADP + phosphate + H(+). It participates in purine metabolism; IMP biosynthesis via de novo pathway; 5-amino-1-(5-phospho-D-ribosyl)imidazole from N(2)-formyl-N(1)-(5-phospho-D-ribosyl)glycinamide: step 2/2. The polypeptide is Phosphoribosylformylglycinamidine cyclo-ligase (Histophilus somni (strain 129Pt) (Haemophilus somnus)).